Consider the following 383-residue polypeptide: 8-amino-7-oxononanoate synthase (383 aa).

Arginine 23 contributes to the substrate binding site. 110 to 111 (GF) is a binding site for pyridoxal 5'-phosphate. A substrate-binding site is contributed by histidine 135. Positions 181, 209, and 235 each coordinate pyridoxal 5'-phosphate. The residue at position 238 (lysine 238) is an N6-(pyridoxal phosphate)lysine. Threonine 351 is a binding site for substrate.

Belongs to the class-II pyridoxal-phosphate-dependent aminotransferase family. BioF subfamily. Homodimer. It depends on pyridoxal 5'-phosphate as a cofactor.

It catalyses the reaction 6-carboxyhexanoyl-[ACP] + L-alanine + H(+) = (8S)-8-amino-7-oxononanoate + holo-[ACP] + CO2. Its pathway is cofactor biosynthesis; biotin biosynthesis. Catalyzes the decarboxylative condensation of pimeloyl-[acyl-carrier protein] and L-alanine to produce 8-amino-7-oxononanoate (AON), [acyl-carrier protein], and carbon dioxide. The polypeptide is 8-amino-7-oxononanoate synthase (Aliivibrio salmonicida (strain LFI1238) (Vibrio salmonicida (strain LFI1238))).